Consider the following 335-residue polypeptide: Probable cytosolic iron-sulfur protein assembly protein Ciao1 (335 aa).

WD repeat units follow at residues 12-51 (GHKGRIWGVAWHPKGNVFASCGEDKAIRIWSLTGNTWSTK), 57-96 (GHKRTIREIQWSPCGQYLASASFDATTAIWSKSSGEFECN), 101-140 (GHENEVKSVSWSRSGGLLATCSRDKSVWIWEVAGDDEFEC), 146-185 (SHTQDVKRVVWHPTKEILASASYDNTIKMYAEEPIDNDWD), 192-231 (SHTSTIWGIDFDADGERLVSCSDDTTVKIWRAYHPGNSAG), 250-289 (QHSRAIYDVSWCKLTGLIATACGDDGIRIFKETSDSKPDE), and 301-335 (AHDQDVNSVQWNPVVAGQLISCSDDGTIKIWKVTE).

The protein belongs to the WD repeat CIA1 family.

Essential component of the cytosolic iron-sulfur (Fe/S) protein assembly machinery. Required for the maturation of extramitochondrial Fe/S proteins. In Drosophila yakuba (Fruit fly), this protein is Probable cytosolic iron-sulfur protein assembly protein Ciao1.